A 131-amino-acid chain; its full sequence is Profilin-2 (131 aa).

The protein belongs to the profilin family. Occurs in many kinds of cells as a complex with monomeric actin in a 1:1 ratio. In terms of tissue distribution, expressed in the intestinal wall, the spermatheca, and the pharynx.

It localises to the cytoplasm. The protein localises to the cytoskeleton. In terms of biological role, binds to actin and affects the structure of the cytoskeleton. At high concentrations, profilin prevents the polymerization of actin, whereas it enhances it at low concentrations. By binding to PIP2, it inhibits the formation of IP3 and DG. The polypeptide is Profilin-2 (pfn-2) (Caenorhabditis elegans).